The sequence spans 230 residues: Heptaprenylglyceryl phosphate synthase (230 aa).

Residue Lys12 coordinates sn-glycerol 1-phosphate. The Mg(2+) site is built by Asp14 and Thr40. Sn-glycerol 1-phosphate is bound by residues 159–164 (YIEYSG), Gly189, and 209–210 (GD).

This sequence belongs to the GGGP/HepGP synthase family. Group I subfamily. In terms of assembly, homodimer. Requires Mg(2+) as cofactor.

It carries out the reaction sn-glycerol 1-phosphate + all-trans-heptaprenyl diphosphate = 3-heptaprenyl-sn-glycero-1-phosphate + diphosphate. It functions in the pathway membrane lipid metabolism; glycerophospholipid metabolism. In terms of biological role, prenyltransferase that catalyzes in vivo the transfer of the heptaprenyl moiety of heptaprenyl pyrophosphate (HepPP; 35 carbon atoms) to the C3 hydroxyl of sn-glycerol-1-phosphate (G1P), producing heptaprenylglyceryl phosphate (HepGP). This reaction is an ether-bond-formation step in the biosynthesis of archaea-type G1P-based membrane lipids found in Bacillales. The sequence is that of Heptaprenylglyceryl phosphate synthase from Staphylococcus aureus (strain USA300).